Here is a 360-residue protein sequence, read N- to C-terminus: Peptide chain release factor 1 (360 aa).

Q234 carries the N5-methylglutamine modification.

The protein belongs to the prokaryotic/mitochondrial release factor family. In terms of processing, methylated by PrmC. Methylation increases the termination efficiency of RF1.

Its subcellular location is the cytoplasm. Functionally, peptide chain release factor 1 directs the termination of translation in response to the peptide chain termination codons UAG and UAA. The protein is Peptide chain release factor 1 of Clostridium botulinum (strain Eklund 17B / Type B).